We begin with the raw amino-acid sequence, 726 residues long: MKSPLPWLKRRLSGRADSEHAQNLIRIIITTLFISYLGWRYQHTHGDTLMATWLILVGELLVSLGLMVAILLRPQVSHTRRLIGMLLDYTCTGAIMAIQGEPASPLYAVCMWVTIGNGLRYGSNYLRAATAMGSLCFLGAILISPYWKANPYLSWGLLLGLIAVPLYFDSLLRAMTRAVREARHANQAKSRFLANMSHEFRTPLNGLSGMTEVLATTRLDAEQKECLNTIQASARSLLSLVEEVLDISAIEAGKIRIDRRDFSLREMIGSVNLILQPQARGRRLEYGTQVADDVPDLLKGDTAHLRQVLLNLVGNAVKFTEHGHVLLRVTRVSGSAEDAVRLRFDVEDTGIGVPMDMRPRLFEAFEQADVGLSRRYEGTGLGTTIAKGLVEAMGGSIGFKENQPSGSVFWFELPMAIGEPLKSSTVRVPTGALVDAPEELESSNIIAFSNPFLRHRARVRSMRMLVADDHEANRMVLQRLLEKAGHKVLCVNGAEQVLDAMAEEDYDAVIVDLHMPGMNGLDMLKQLRVMQASGMRYTPVVVLSADVTPEAIRACEQAGARAFLAKPVVAAKLLDTLADLAVSTRQLATPATTVQVATSFEGVLDSSVLDELAALGMGEEFERQFVRQCLDDAQNCVGDIERDGTCSDWEQLRESAHALRGVASNLGLAQVASSGGELMRMADWQLQAEWRLRLSTLREQLKAGKDALDARVQGVKDGECSPRSNE.

The next 5 membrane-spanning stretches (helical) occupy residues 23-40 (NLIR…LGWR), 52-72 (TWLI…AILL), 95-115 (IMAI…WVTI), 128-148 (AATA…PYWK), and 152-172 (YLSW…DSLL). One can recognise a Histidine kinase domain in the interval 195-417 (NMSHEFRTPL…VFWFELPMAI (223 aa)). His-198 carries the phosphohistidine; by autocatalysis modification. Residues 463–581 (RMLVADDHEA…KLLDTLADLA (119 aa)) enclose the Response regulatory domain. A 4-aspartylphosphate modification is found at Asp-512. The region spanning 618 to 711 (GEEFERQFVR…KAGKDALDAR (94 aa)) is the HPt domain. The residue at position 657 (His-657) is a Phosphohistidine.

At low DSF concentrations, interacts with RpfF. In terms of processing, autophosphorylated. Activation may require a sequential transfer of a phosphate group from a His in the primary transmitter domain, to an Asp in the receiver domain and to a His in the secondary transmitter domain.

It localises to the cell inner membrane. The catalysed reaction is ATP + protein L-histidine = ADP + protein N-phospho-L-histidine.. Binding of DSF to the sensor region causes allosteric change, which facilitates RpfC autophosphorylation. Its function is as follows. Hybrid sensor kinase that regulates diverse biological functions through two distinct molecular mechanisms. At low cell density, the extracellular concentration of the diffusible signaling factor (DSF) is below a threshold, and unphosphorylated RpfC is involved in the negative regulation of DSF synthesis, via direct interaction with the DSF synthase RpfF. Interaction prevents synthesis of DSF, which remains at a basal level. This activity does not involve the phosphorelay mechanism and is not dependent on RpfG. Is also member of the two-component regulatory system RpfG/RpfC, which is involved in the perception and response to DSF, which is essential for cell-cell signaling. At high cell density, the level of extracellular DSF increases and binding of DSF to the sensor region of RpfC causes autophosphorylation of RpfC, which results in the release of RpfF and the activation of RpfG via a four-step phosphorelay. Activation of RpfG leads to the positive regulation of biofilm dispersal and the production of virulence factors. In Xanthomonas campestris pv. campestris (strain ATCC 33913 / DSM 3586 / NCPPB 528 / LMG 568 / P 25), this protein is Sensory/regulatory protein RpfC (rpfC).